The sequence spans 189 residues: Protein sisterless A (189 aa).

The segment at Asp93–Arg124 is disordered. Over residues Asp108–Arg121 the composition is skewed to basic and acidic residues.

Homodimer. Interacts with dpn (via bHLH motif). Interacts with da (via bHLH motif). Interacts with Bap60. In terms of tissue distribution, localizes to all the embryonic nuclei until nuclear cycle 9, when expression ceases in the prepole cell nuclei. Associates with the somatic nuclei through cycle 10. By nuclear cycle 12, distributes uniformly in the somatic portion of the embryo and no longer associates with the nuclei. After early cycle 14 (beginning of cellularization) there is very little or no expression in the periphery of the embryo or in either the somatic or germ cells. In the yolk, accumulates at the nuclei from nuclear cycle 8 until 10-11 hours after fertilization.

It is found in the nucleus. In terms of biological role, involved in sex determination and dosage compensation. Required for proper expression of Sxl in embryonic somatic cells. Also has an essential function in the yolk nuclei. Involved in endoderm migration and midgut formation. In Drosophila melanogaster (Fruit fly), this protein is Protein sisterless A (sisA).